We begin with the raw amino-acid sequence, 248 residues long: PF03932 family protein CutC (248 aa).

Belongs to the CutC family. In terms of assembly, homodimer.

Its subcellular location is the cytoplasm. The sequence is that of PF03932 family protein CutC from Salmonella schwarzengrund (strain CVM19633).